Reading from the N-terminus, the 417-residue chain is MAEIRNYTLNFGPQHPAAHGVLRLVLELDGEVVQRADPHIGLLHRGTEKLAESKTFIQSLPYMDRLDYVSMMCNEHAYCLAIEKMMGIEVPERAQYIRVMFAEITRILNHLLWIGAHALDIGAMTMFLYAFREREDLMDCYEAVSGARMHAAYFRPGGVYRDLPDSMPQYTVSKIKNAKELARLNEGRKGSMLDFIEDFTKRFPTYVDEYETLLTDNRIWKQRTVGIGVVTPERALNLGMTGPMLRGSGIAWDLRKTQPYDVYDKMDFDVPVGVGGDCYDRYLVRVEEMRQSNRIIQQCVAWLRANPGPVITDNHKVAPPSREGMKSNMEDLIHHFKLFTEGMHVPEGEAYAAVEHPKGEFGIYLVSDGANKPYRLKIRAPGYAHLAALDEMATGHMIADVVAIIGTQDIVFGEIDR.

Belongs to the complex I 49 kDa subunit family. As to quaternary structure, NDH-1 is composed of 14 different subunits. Subunits NuoB, C, D, E, F, and G constitute the peripheral sector of the complex.

Its subcellular location is the cell inner membrane. The catalysed reaction is a quinone + NADH + 5 H(+)(in) = a quinol + NAD(+) + 4 H(+)(out). In terms of biological role, NDH-1 shuttles electrons from NADH, via FMN and iron-sulfur (Fe-S) centers, to quinones in the respiratory chain. The immediate electron acceptor for the enzyme in this species is believed to be ubiquinone. Couples the redox reaction to proton translocation (for every two electrons transferred, four hydrogen ions are translocated across the cytoplasmic membrane), and thus conserves the redox energy in a proton gradient. This Chromobacterium violaceum (strain ATCC 12472 / DSM 30191 / JCM 1249 / CCUG 213 / NBRC 12614 / NCIMB 9131 / NCTC 9757 / MK) protein is NADH-quinone oxidoreductase subunit D.